The following is a 548-amino-acid chain: Zinc metalloproteinase dpy-31 (548 aa).

An N-terminal signal peptide occupies residues 1–24 (MSLLRSASLLLVVVTAALPPCTLG). Residues 25 to 150 (YSLHDGSRLD…KTGQRRVKRK (126 aa)) constitute a propeptide that is removed on maturation. Residues 150–349 (KFIGSDLRRW…IRLMNKIYCS (200 aa)) form the Peptidase M12A domain. N-linked (GlcNAc...) asparagine glycosylation is present at Asn-190. 5 cysteine pairs are disulfide-bonded: Cys-193/Cys-348, Cys-216/Cys-237, Cys-352/Cys-372, Cys-374/Cys-383, and Cys-394/Cys-422. Residue His-245 participates in Zn(2+) binding. Glu-246 is an active-site residue. Zn(2+) contacts are provided by His-249 and His-255. The EGF-like domain occupies 344–384 (NKIYCSNVCSRKLPCQRGGYTDPRRCDRCRCPDGFTGQFCE). A CUB domain is found at 394 to 510 (CGGRIQVNSG…RGFEARARAL (117 aa)). Asn-461 carries N-linked (GlcNAc...) asparagine glycosylation. The region spanning 513 to 547 (NGQWASWTPWTPCTASCGACGSRMRTRVCPHGACP) is the TSP type-1 domain. 3 disulfide bridges follow: Cys-525/Cys-546, Cys-529/Cys-546, and Cys-541/Cys-546.

It depends on Zn(2+) as a cofactor.

The protein resides in the secreted. Functionally, metalloprotease which cleaves the carboxyl terminus of procollagens to mature collagens. Probably involved in cuticular collagen maturation. The polypeptide is Zinc metalloproteinase dpy-31 (Haemonchus contortus (Barber pole worm)).